We begin with the raw amino-acid sequence, 256 residues long: Nuclear shuttle protein (256 aa).

Positions 21 to 42 (NSLIRQQSLFKRNVSKRRPFQT) match the Bipartite nuclear localization signal motif. A Nuclear localization signal motif is present at residues 81 to 96 (DIAKSLPNRTRSYIKL). The interaction with Arabidopsis thaliana NSI protein stretch occupies residues 150-187 (ELFGARIHSHGNLAIVPSLKDRFYIRHVLKRVISVEKD).

Belongs to the begomovirus nuclear shuttle protein family. As to quaternary structure, binds to single-stranded and double-stranded viral DNA. Interacts with the host nuclear shuttle interacting (NSI) protein. This interaction may allow NSP to recruit NSI monomers to the viral genome and thus regulate nuclear export of viral genome by NSP.

It is found in the host nucleus. Its subcellular location is the host cytoplasm. It localises to the host cell membrane. Functionally, binds to the genomic viral ssDNA, shuttles it into and out of the cell nucleus. Begomoviruses use 2 proteins to transport their DNA from cell to cell. The nuclear shuttle protein (NSP) shuttles it between nucleus and cytoplasm and the movement protein (MP) probably transports the DNA-NSP complex to the cell periphery and facilitates movement across the cell wall. In Potato yellow mosaic virus (isolate Venezuela) (PYMV), this protein is Nuclear shuttle protein.